Reading from the N-terminus, the 735-residue chain is Ion-translocating oxidoreductase complex subunit C (735 aa).

2 4Fe-4S ferredoxin-type domains span residues 368-397 (MGAPQEEKSCIRCSACADACPADLLPQQLY) and 407-436 (KATAHHIADCIECGACAWVCPSNIPLVQYF). 8 residues coordinate [4Fe-4S] cluster: cysteine 377, cysteine 380, cysteine 383, cysteine 387, cysteine 416, cysteine 419, cysteine 422, and cysteine 426. The disordered stretch occupies residues 562-713 (AIARAKARKQ…AEPADPRKAA (152 aa)).

The protein belongs to the 4Fe4S bacterial-type ferredoxin family. RnfC subfamily. As to quaternary structure, the complex is composed of six subunits: RsxA, RsxB, RsxC, RsxD, RsxE and RsxG. It depends on [4Fe-4S] cluster as a cofactor.

Its subcellular location is the cell inner membrane. In terms of biological role, part of a membrane-bound complex that couples electron transfer with translocation of ions across the membrane. Required to maintain the reduced state of SoxR. The sequence is that of Ion-translocating oxidoreductase complex subunit C from Salmonella newport (strain SL254).